Reading from the N-terminus, the 102-residue chain is UPF0122 protein MPN_424 (102 aa).

This sequence belongs to the UPF0122 family.

Might take part in the signal recognition particle (SRP) pathway. This is inferred from the conservation of its genetic proximity to ftsY/ffh. May be a regulatory protein. The chain is UPF0122 protein MPN_424 from Mycoplasma pneumoniae (strain ATCC 29342 / M129 / Subtype 1) (Mycoplasmoides pneumoniae).